An 89-amino-acid polypeptide reads, in one-letter code: Small ribosomal subunit protein uS15 (89 aa).

The protein belongs to the universal ribosomal protein uS15 family. In terms of assembly, part of the 30S ribosomal subunit. Forms a bridge to the 50S subunit in the 70S ribosome, contacting the 23S rRNA.

Functionally, one of the primary rRNA binding proteins, it binds directly to 16S rRNA where it helps nucleate assembly of the platform of the 30S subunit by binding and bridging several RNA helices of the 16S rRNA. Its function is as follows. Forms an intersubunit bridge (bridge B4) with the 23S rRNA of the 50S subunit in the ribosome. The chain is Small ribosomal subunit protein uS15 from Corynebacterium glutamicum (strain R).